A 65-amino-acid chain; its full sequence is Large ribosomal subunit protein bL35 (65 aa).

Residues 1–16 (MPKQKTHRASAKRFKR) are compositionally biased toward basic residues. Positions 1–20 (MPKQKTHRASAKRFKRTGSG) are disordered.

The protein belongs to the bacterial ribosomal protein bL35 family.

The protein is Large ribosomal subunit protein bL35 of Streptococcus pyogenes serotype M1.